Consider the following 503-residue polypeptide: Lysine--tRNA ligase (503 aa).

Residues glutamate 413 and glutamate 420 each coordinate Mg(2+).

Belongs to the class-II aminoacyl-tRNA synthetase family. Homodimer. It depends on Mg(2+) as a cofactor.

It is found in the cytoplasm. It carries out the reaction tRNA(Lys) + L-lysine + ATP = L-lysyl-tRNA(Lys) + AMP + diphosphate. The chain is Lysine--tRNA ligase from Actinobacillus succinogenes (strain ATCC 55618 / DSM 22257 / CCUG 43843 / 130Z).